A 285-amino-acid chain; its full sequence is Energy-coupling factor transporter ATP-binding protein EcfA2 (285 aa).

The region spanning 3–245 (IKIENLNHIY…VETLEKIGLA (243 aa)) is the ABC transporter domain. ATP is bound at residue 40–47 (GHTGSGKS).

Belongs to the ABC transporter superfamily. Energy-coupling factor EcfA family. As to quaternary structure, forms a stable energy-coupling factor (ECF) transporter complex composed of 2 membrane-embedded substrate-binding proteins (S component), 2 ATP-binding proteins (A component) and 2 transmembrane proteins (T component).

The protein localises to the cell membrane. Its function is as follows. ATP-binding (A) component of a common energy-coupling factor (ECF) ABC-transporter complex. Unlike classic ABC transporters this ECF transporter provides the energy necessary to transport a number of different substrates. The polypeptide is Energy-coupling factor transporter ATP-binding protein EcfA2 (Clostridium perfringens (strain 13 / Type A)).